Consider the following 1368-residue polypeptide: DNA-directed RNA polymerase subunit beta (1368 aa).

This sequence belongs to the RNA polymerase beta chain family. As to quaternary structure, the RNAP catalytic core consists of 2 alpha, 1 beta, 1 beta' and 1 omega subunit. When a sigma factor is associated with the core the holoenzyme is formed, which can initiate transcription.

It carries out the reaction RNA(n) + a ribonucleoside 5'-triphosphate = RNA(n+1) + diphosphate. Functionally, DNA-dependent RNA polymerase catalyzes the transcription of DNA into RNA using the four ribonucleoside triphosphates as substrates. The chain is DNA-directed RNA polymerase subunit beta from Legionella pneumophila (strain Corby).